We begin with the raw amino-acid sequence, 415 residues long: MQDLTINAIGAQGDGLARTADGKPAFVPLTLPGEVVRAKMDGARGEVVEILAPSPERVAPACRHYGVCGGCALQHWAAEPYRAWKAEQVRLQLSMEGLETEILPTFAAPPASRRRVALHARKGGKGQGARLGFKERRSWNLVSIEECPVTDPRLVAALPALARLAEPFLEHPKSAPTLHVTLTATGLDIDITGVERKSGGLSADARMRAAMAAGEGDFARVTLAGETIYGARQPLVKLGQAVVALPPGSFLQAVPAAEKAMVELAVAEAQGASRVADLYCGVGTFTFPLAEVAQVYAAEMSAPAITALKAAIGGAPGLKPITAEARDLVRRPVLSTELAKTDVVVIDPPRAGAAEQTVEIAKSKVAKVLGVSCNPQTFAKDARVLVDAGFKLVRVTPVDQFVWSPHIELVGVFTR.

Positions 1 to 52 (MQDLTINAIGAQGDGLARTADGKPAFVPLTLPGEVVRAKMDGARGEVVEILA) constitute a TRAM domain. [4Fe-4S] cluster-binding residues include Cys-62, Cys-68, Cys-71, and Cys-147. 4 residues coordinate S-adenosyl-L-methionine: Gln-252, Tyr-279, Glu-299, and Asp-347. Cys-373 serves as the catalytic Nucleophile.

It belongs to the class I-like SAM-binding methyltransferase superfamily. RNA M5U methyltransferase family.

This is an uncharacterized protein from Caulobacter vibrioides (strain ATCC 19089 / CIP 103742 / CB 15) (Caulobacter crescentus).